We begin with the raw amino-acid sequence, 440 residues long: Polyprenol-phosphate-mannose-dependent alpha-(1-2)-phosphatidylinositol mannoside mannosyltransferase (440 aa).

11 helical membrane-spanning segments follow: residues 15–35 (LAPT…VLWV), 87–107 (LAAI…SSAI), 109–129 (ATTL…LDVW), 144–161 (AWLA…LEPI), 164–184 (NFEF…DCVP), 193–213 (LLLG…LYFL), 224–244 (TAAT…SDSV), 281–301 (PRFI…VWAA), 316–336 (APVL…PVSW), 360–380 (VWFT…PITL), and 395–415 (LAGG…GLVS). Residues 419–440 (THTGDAHETDEPLVPLARGEAG) form a disordered region.

This sequence belongs to the glycosyltransferase 87 family.

It is found in the cell membrane. Its pathway is phospholipid metabolism; phosphatidylinositol metabolism. Functionally, responsible for the addition of alpha-(1-2) mannose branches to the linear mannan core on the biosynthetic pathway to mature Lipoarabinomannan (LAM). The protein is Polyprenol-phosphate-mannose-dependent alpha-(1-2)-phosphatidylinositol mannoside mannosyltransferase of Mycolicibacterium smegmatis (strain ATCC 700084 / mc(2)155) (Mycobacterium smegmatis).